A 201-amino-acid polypeptide reads, in one-letter code: dTTP/UTP pyrophosphatase (201 aa).

The active-site Proton acceptor is the Asp-79.

This sequence belongs to the Maf family. YhdE subfamily. A divalent metal cation is required as a cofactor.

The protein resides in the cytoplasm. It carries out the reaction dTTP + H2O = dTMP + diphosphate + H(+). The catalysed reaction is UTP + H2O = UMP + diphosphate + H(+). Functionally, nucleoside triphosphate pyrophosphatase that hydrolyzes dTTP and UTP. May have a dual role in cell division arrest and in preventing the incorporation of modified nucleotides into cellular nucleic acids. This Hahella chejuensis (strain KCTC 2396) protein is dTTP/UTP pyrophosphatase.